A 389-amino-acid chain; its full sequence is S-adenosylmethionine synthase (389 aa).

His17 contacts ATP. Asp19 provides a ligand contact to Mg(2+). Glu45 is a K(+) binding site. The L-methionine site is built by Glu58 and Gln101. The segment at 101-111 is flexible loop; sequence QSPDISQGVDG. Residues 170–172, 237–238, Asp246, 252–253, Ala269, and Lys273 contribute to the ATP site; these read DSK, RF, and RK. Asp246 is an L-methionine binding site. Residue Lys277 participates in L-methionine binding.

Belongs to the AdoMet synthase family. As to quaternary structure, homotetramer; dimer of dimers. Mg(2+) serves as cofactor. K(+) is required as a cofactor.

Its subcellular location is the cytoplasm. The catalysed reaction is L-methionine + ATP + H2O = S-adenosyl-L-methionine + phosphate + diphosphate. Its pathway is amino-acid biosynthesis; S-adenosyl-L-methionine biosynthesis; S-adenosyl-L-methionine from L-methionine: step 1/1. Catalyzes the formation of S-adenosylmethionine (AdoMet) from methionine and ATP. The overall synthetic reaction is composed of two sequential steps, AdoMet formation and the subsequent tripolyphosphate hydrolysis which occurs prior to release of AdoMet from the enzyme. This is S-adenosylmethionine synthase from Treponema denticola (strain ATCC 35405 / DSM 14222 / CIP 103919 / JCM 8153 / KCTC 15104).